The following is a 1040-amino-acid chain: Vacuolar membrane protease (1040 aa).

Residues 1–9 (MINPISFRP) lie on the Cytoplasmic side of the membrane. Residues 10-30 (GPVTFWTTLIYLALLIPIVII) form a helical membrane-spanning segment. At 31–405 (NEEPPAAPKT…SFVLFGLRGM (375 aa)) the chain is on the vacuolar side. N-linked (GlcNAc...) asparagine glycosylation is found at Asn48, Asn117, Asn120, and Asn129. Residues His186 and Asp198 each contribute to the Zn(2+) site. Glu232 functions as the Proton acceptor in the catalytic mechanism. Residues Glu233, Glu258, and His331 each contribute to the Zn(2+) site. The helical transmembrane segment at 406–426 (FAWSLTLLIATPLILVGITWL) threads the bilayer. Residues 427-436 (LRNLDKDYFF) lie on the Cytoplasmic side of the membrane. Residues 437 to 456 (TSTVKTKEHPEYEAVPIGGW) form a helical membrane-spanning segment. At 457–462 (KGFFRW) the chain is on the vacuolar side. The helical transmembrane segment at 463–483 (AMMVSIFYFSFWMIMRGANFV) threads the bilayer. Residues 484 to 490 (RPSALHR) lie on the Cytoplasmic side of the membrane. The chain crosses the membrane as a helical span at residues 491–511 (GYANLWLFVFGWIVLVAVTAL). At 512-521 (EDRRRIAAGY) the chain is on the vacuolar side. Residues 522-542 (IFVFLESAIFLSCLISFVELL) form a helical membrane-spanning segment. The Cytoplasmic portion of the chain corresponds to 543–715 (ALPRKSAYAL…YEHEQDWSGH (173 aa)). The disordered stretch occupies residues 563 to 680 (HSGYQGYRDS…NGTNDRGRTT (118 aa)). 2 stretches are compositionally biased toward low complexity: residues 577-594 (SSGA…PSSP) and 616-626 (APSVAAHSSQP). Polar residues predominate over residues 636–647 (GRSTSAPIPSTT). Residues 650-661 (DEDESEDDDDEA) show a composition bias toward acidic residues. The chain crosses the membrane as a helical span at residues 716 to 736 (LPSWAWFFQFLLLGPFMIILA). The Vacuolar portion of the chain corresponds to 737 to 758 (AQTGLMLTDAVYQTGSDGSKLF). A helical transmembrane segment spans residues 759–779 (TPYLMIFFFTLLLILPLTPFI). Residues 780-785 (HRVTHH) are Cytoplasmic-facing. Residues 786–806 (IPVFLLVVFIVTLTYNLIAFP) form a helical membrane-spanning segment. Over 807–1040 (FSANNRYKAF…VEGRKAFKIV (234 aa)) the chain is Vacuolar. Residue Asn900 is glycosylated (N-linked (GlcNAc...) asparagine).

Belongs to the peptidase M28 family. Zn(2+) is required as a cofactor.

The protein localises to the vacuole membrane. May be involved in vacuolar sorting and osmoregulation. This chain is Vacuolar membrane protease, found in Sordaria macrospora (strain ATCC MYA-333 / DSM 997 / K(L3346) / K-hell).